The primary structure comprises 493 residues: Cytochrome P450 monooxygenase olcG (493 aa).

The chain crosses the membrane as a helical span at residues 15 to 35 (GILATGALVIFVALFLATFQF). Cysteine 429 contributes to the heme binding site.

This sequence belongs to the cytochrome P450 family. Heme is required as a cofactor.

The protein localises to the membrane. It participates in secondary metabolite biosynthesis; terpenoid biosynthesis. In terms of biological role, cytochrome P450 monooxygenase; part of the gene cluster that mediates the biosynthesis of 15-deoxyoxalicine B. The first step of the pathway is the synthesis of nicotinyl-CoA from nicotinic acid by the nicotinic acid-CoA ligase olcI. Nicotinyl-CoA is then a substrate of polyketide synthase olcA to produce 4-hydroxy-6-(3-pyridinyl)-2H-pyran-2-one (HPPO) which is further prenylated by the polyprenyl transferase olcH to yield geranylgeranyl-HPPO. Geranylgeranyl pyrophosphate is provided by the cluster-specific geranylgeranyl pyrophosphate synthase olcC. The FAD-dependent monooxygenase olcE catalyzes the epoxidation of geranylgeranyl-HPPO and the terpene cyclase olcD catalyzes the cyclization of the terpenoid component, resulting in the formation of the tricyclic terpene moiety seen in predecaturin E. The cytochrome P450 monooxygenase then catalyzes the allylic oxidation of predecaturin E, which is followed by spirocylization with concomitant loss of one molecule of water to form decaturin E. Decaturin E is the substrate of the cytochrome P450 monooxygenase olcJ which hydroxylates it at the C-29 position to form decaturin F. The short-chain dehydrogenase/reductase olcF may catalyze the oxidation of decaturin F to generate the 29-hydroxyl-27-one intermediate, and subsequent hemiacetal formation probably leads to the formation of decaturin C. The dioxygenase olcK may be a peroxisomal enzyme that catalyzes the hydroxylation of decaturin C into decaturin A once decaturin C is shuttled into the peroxisome by the MFS transporter olcL. Finally the cytochrome P450 monooxygenase olcB catalyzes the oxidative rearrangement to yield 15-deoxyoxalicine B. In the absence of olcJ, decaturin E may be shunted to a pathway in which it is oxidized to a ketone, possibly by olcF, to form decaturin D, which undergoes further allylic oxidation to yield decaturin G. Moreover, in the absence of oclK or oclL, oclB can convert decaturin C into 15-deoxyoxalicine A. In Penicillium canescens, this protein is Cytochrome P450 monooxygenase olcG.